A 1475-amino-acid polypeptide reads, in one-letter code: Peroxidasin homolog (1475 aa).

The first 23 residues, 1–23 (MAVRPTRRCLLALLLCFAWWAMA), serve as a signal peptide directing secretion. The region spanning 24 to 60 (VVASKQGAGCPSRCLCFRTTVRCMHLLLEAVPAVAPQ) is the LRRNT domain. Cystine bridges form between Cys-33–Cys-39 and Cys-37–Cys-46. 6 LRR repeats span residues 58–81 (APQT…AFRR), 82–105 (LRSL…AFED), 107–129 (ENLK…AFKG), 130–153 (LASL…SFQH), 154–177 (LPKL…TFSQ), and 179–201 (ESMK…LWLA). An LRRCT domain is found at 189-241 (NALHCDCEILWLADLLKTYAQSGNAQAAATCEYPRRIQGRSVATITPEELNCE). Disulfide bonds link Cys-193-Cys-240, Cys-195-Cys-219, Cys-264-Cys-314, Cys-360-Cys-409, Cys-451-Cys-499, and Cys-543-Cys-591. Ig-like C2-type domains follow at residues 243-329 (PRIT…QEVT), 339-425 (PTFV…AFII), 430-517 (PQFT…LTVQ), and 518-607 (PRVT…MVLS). An N-linked (GlcNAc...) asparagine glycan is attached at Asn-387. An LRR 7 repeat occupies 402 to 425 (SDSGEYTCFASNSVDSIHATAFII). Residues Asn-637, Asn-696, Asn-716, and Asn-728 are each glycosylated (N-linked (GlcNAc...) asparagine). Disulfide bonds link Cys-720–Cys-882, Cys-729–Cys-745, Cys-844–Cys-854, and Cys-848–Cys-872. Residue Asp-823 participates in heme b binding. His-824 acts as the Proton acceptor in catalysis. Asp-825 provides a ligand contact to Ca(2+). Thr-904, Tyr-906, Asp-908, and Ser-910 together coordinate Ca(2+). Residues Cys-956 and Cys-967 are joined by a disulfide bond. Residue Asn-961 is glycosylated (N-linked (GlcNAc...) asparagine). Positions 977 and 1071 each coordinate heme b. The stretch at 1148 to 1172 (ALDLAAINIQRGRDHGIPPYHDYRV) is one LRR 8 repeat. Tyr-1173 is subject to Phosphotyrosine. 2 disulfides stabilise this stretch: Cys-1174-Cys-1231 and Cys-1272-Cys-1298. Residue Asn-1175 is glycosylated (N-linked (GlcNAc...) asparagine). Ser-1177 is modified (phosphoserine). One copy of the LRR 9 repeat lies at 1267-1288 (LARILCDNSDNITRVQQDVFRV). 2 N-linked (GlcNAc...) asparagine glycosylation sites follow: Asn-1277 and Asn-1364. Positions 1312–1407 (CCEDCRTRGQ…QINSLESRLS (96 aa)) are required in homotrimerization. A VWFC domain is found at 1409-1467 (TECVDDSGESHGGNTKWKKDPCTVCECKNGQITCFVEACQPAACPQPVKVEGACCPVCL).

Belongs to the peroxidase family. XPO subfamily. As to quaternary structure, homotrimer; disulfide-linked. The homotrimer form is predominant. Homooligomer; disulfide-linked. Oligomerization occurs intracellularly before C-terminal proteolytic cleavage. Interacts with PXDNL; this interaction inhibits the peroxidase activity of PXDN. It depends on Ca(2+) as a cofactor. The cofactor is heme b. In terms of processing, processed by FURIN and the proteolytic processing largely depends on the peroxidase activity of PXDN. The proteolytic cleavage occurs after intracellular homotrimerization and releases into the extracellular matrix a large, catalytically active fragment and a smaller fragment consisting primarily of the C-terminal VWFC domain. The processing enhances both peroxidase activity and sulfilimine cross-links formation. Highly expressed in the cardiovascular system. In the embryo, expressed in the corneal epithelial layer. In the adult eyes, expressed in the corneal and lens epithelium. Expressed in lung.

The protein resides in the secreted. Its subcellular location is the extracellular space. It localises to the extracellular matrix. The protein localises to the endoplasmic reticulum. It is found in the cell surface. The protein resides in the basement membrane. It catalyses the reaction L-lysyl-[collagen] + L-methionyl-[collagen] + H2O2 = [collagen]-L-lysyl-N-S-L-methionyl-[collagen] + 2 H2O + H(+). The enzyme catalyses bromide + H2O2 = hypobromite + H2O. It carries out the reaction L-lysyl-[collagen] + L-methionyl-[collagen] + hypobromite = [collagen]-L-lysyl-N-S-L-methionyl-[collagen] + bromide + H2O + H(+). The catalysed reaction is (5R)-5-hydroxy-L-lysyl-[collagen] + L-methionyl-[collagen] + hypobromite = [collagen]-(5R)-5-hydroxy-L-lysyl-N-S-L-methionyl-[collagen] + bromide + H2O + H(+). It catalyses the reaction (5R)-5-hydroxy-L-lysyl-[collagen] + L-methionyl-[collagen] + H2O2 = [collagen]-(5R)-5-hydroxy-L-lysyl-N-S-L-methionyl-[collagen] + 2 H2O + H(+). The enzyme catalyses L-tyrosyl-[protein] + bromide + H2O2 + H(+) = 3-bromo-L-tyrosyl-[protein] + 2 H2O. It carries out the reaction hypobromite + L-tyrosyl-[protein] + H(+) = 3-bromo-L-tyrosyl-[protein] + H2O. Its activity is regulated as follows. Thiocyanate inhibits the formation of 3-bromotyrosine. Catalyzes the two-electron oxidation of bromide by hydrogen peroxide and generates hypobromite as a reactive intermediate which mediates the formation of sulfilimine cross-links between methionine and hydroxylysine residues within an uncross-linked collagen IV/COL4A1 NC1 hexamer. In turns, directly contributes to the collagen IV network-dependent fibronectin/FN and laminin assembly, which is required for full extracellular matrix (ECM)-mediated signaling. Thus, sulfilimine cross-links are essential for growth factor-induced cell proliferation and survival in endothelial cells, an event essential to basement membrane integrity. In addition, through the bromide oxidation, may promote tubulogenesis and induce angiogenesis through ERK1/2, Akt, and FAK pathways. Moreover brominates alpha2 collagen IV chain/COL4A2 at 'Tyr-1480' and leads to bromine enrichment of the basement membranes. In vitro, can also catalyze the two-electron oxidation of thiocyanate and iodide and these two substrates could effectively compete with bromide and thus inhibit the formation of sulfilimine bonds. Binds laminins. May play a role in the organization of eyeball structure and lens development during eye development. The sequence is that of Peroxidasin homolog from Mus musculus (Mouse).